The primary structure comprises 278 residues: MAIKTYKPYTPSRRFMSVLDSKDITAKSSVKGLLTKLKATAGRNNNGRITSRHKERGAKKLYRIIDFKRNKYNIEGKVAAIEYDPYRNARIALVVYPDGDKRYILQPSGLKVGDSVIAAEGGLDIKVGFAMKLKNIPIGTVVHNIEMHPGAGGQLARSAGMSAQIMGRENKYTILRMPSSEMRYILSECMASVGVVGNEDFINVSIGKAGRNRHRGIRPQTRGSAMNPVDHPHGGGEGKTGTSGHPVSPWGTPAKGYKTRKKKASDKLIISRKKHKKG.

The interval 212–278 (NRHRGIRPQT…IISRKKHKKG (67 aa)) is disordered. Residues 257–278 (YKTRKKKASDKLIISRKKHKKG) show a composition bias toward basic residues.

It belongs to the universal ribosomal protein uL2 family. Part of the 50S ribosomal subunit. Forms a bridge to the 30S subunit in the 70S ribosome.

In terms of biological role, one of the primary rRNA binding proteins. Required for association of the 30S and 50S subunits to form the 70S ribosome, for tRNA binding and peptide bond formation. It has been suggested to have peptidyltransferase activity; this is somewhat controversial. Makes several contacts with the 16S rRNA in the 70S ribosome. The sequence is that of Large ribosomal subunit protein uL2 from Helicobacter pylori (strain Shi470).